Here is a 252-residue protein sequence, read N- to C-terminus: 14-3-3 protein 10 (252 aa).

It belongs to the 14-3-3 family. In terms of assembly, homodimer.

This is 14-3-3 protein 10 (TFT10) from Solanum lycopersicum (Tomato).